The following is a 1074-amino-acid chain: Phospholipase D1 (1074 aa).

Residues Val-81–Ser-212 form the PX domain. Positions Pro-219 to Gln-328 constitute a PH domain. S-palmitoyl cysteine attachment occurs at residues Cys-240 and Cys-241. The PLD phosphodiesterase 1 domain maps to Tyr-459–Arg-486. The tract at residues His-463–Ala-928 is catalytic. Ser-499, Ser-561, and Ser-629 each carry phosphoserine. The 28-residue stretch at Glu-891–Ser-918 folds into the PLD phosphodiesterase 2 domain.

Belongs to the phospholipase D family. In terms of assembly, interacts with PIP5K1B. Post-translationally, phosphorylated on serine and threonine residues. It is uncertain whether palmitoylation is on Cys-240 and/or Cys-241. Palmitoylation is required prior to phosphorylation.

It localises to the cytoplasm. It is found in the perinuclear region. The protein resides in the endoplasmic reticulum membrane. The protein localises to the golgi apparatus membrane. Its subcellular location is the late endosome membrane. The catalysed reaction is a 1,2-diacyl-sn-glycero-3-phosphocholine + H2O = a 1,2-diacyl-sn-glycero-3-phosphate + choline + H(+). The enzyme catalyses ethanol + a 1,2-diacyl-sn-glycero-3-phosphocholine = 1,2-diacyl-sn-glycero-3-phosphoethanol + choline. It carries out the reaction 1,2-dihexadecanoyl-sn-glycero-3-phosphocholine + H2O = 1,2-dihexadecanoyl-sn-glycero-3-phosphate + choline + H(+). Its activity is regulated as follows. Stimulated by phosphatidylinositol 4,5-bisphosphate and phosphatidylinositol 3,4,5-trisphosphate, activated by the phosphokinase C-alpha, by the ADP-ribosylation factor-1 (ARF-1), and to a lesser extent by GTP-binding proteins: RHO A, RAC-1 and CDC42. Inhibited by oleate. In terms of biological role, function as phospholipase selective for phosphatidylcholine. Implicated as a critical step in numerous cellular pathways, including signal transduction, membrane trafficking, and the regulation of mitosis. May be involved in the regulation of perinuclear intravesicular membrane traffic. The chain is Phospholipase D1 from Rattus norvegicus (Rat).